A 25-amino-acid chain; its full sequence is Antimicrobial peptide 3 (25 aa).

In terms of tissue distribution, skin.

The protein resides in the secreted. Its function is as follows. Has antibacterial activity against Gram-positive bacterium S.aureus and Gram-negative bacterium E.coli, when in combination with XT1 and XT6. This is Antimicrobial peptide 3 from Xenopus tropicalis (Western clawed frog).